A 349-amino-acid polypeptide reads, in one-letter code: MATPELMLSLGLIEKDVNADTLWVWCYPSIDADLREVMLRKCCLTLDNQVLHTFVFGQFCRTWYYITTVEVQEPTVLKKVTHFSIVVTAKDFNPEKYAAFSRVLCRTYMKHGSPVKMMEGYIAVLTKGICQSDENGSFLIKDYDVRKALLAGSLKDVVSQFGMETIILYTALMLKKRVVVYHPRIEALLEFTRALPCLVWHRKDWSILHPFVHLENDELENLKVCTGYVAGFVDPEVKDRSDLFDVFVNLPDSEITVSQNAKEAMSMGKLHKEIGNFIVQAAEDADRSDAQVIKDISVKTKEILSNLMSLADHADNSKLTLECLKQGHYPPATENFLFHLAAAEQLLKI.

Positions 1–135 (MATPELMLSL…TKGICQSDEN (135 aa)) constitute a uDENN domain. The region spanning 160–294 (QFGMETIILY…ADRSDAQVIK (135 aa)) is the cDENN domain. The 54-residue stretch at 296 to 349 (ISVKTKEILSNLMSLADHADNSKLTLECLKQGHYPPATENFLFHLAAAEQLLKI) folds into the dDENN domain.

This sequence belongs to the DENND10 family.

The protein localises to the late endosome. Guanine nucleotide exchange factor (GEF) which may be involved in the regulation of late endocytic pathway homeostasis, including endosomal positioning, maturation and secretion. The chain is DENN domain-containing protein 10 (dennd10) from Danio rerio (Zebrafish).